Consider the following 456-residue polypeptide: Bifunctional protein GlmU (456 aa).

The pyrophosphorylase stretch occupies residues 1–228 (MPQNTLNIVI…SHLAAGVNNK (228 aa)). UDP-N-acetyl-alpha-D-glucosamine-binding positions include 11 to 14 (LAAG), lysine 25, glutamine 75, 80 to 81 (GT), 102 to 104 (YGD), glycine 138, glutamate 153, asparagine 168, and asparagine 226. Aspartate 104 lines the Mg(2+) pocket. Asparagine 226 lines the Mg(2+) pocket. The tract at residues 229-249 (LQLAELERIFQTEQAQELLKA) is linker. The interval 250-456 (GVTLRDPARF…GWVRPEKNKQ (207 aa)) is N-acetyltransferase. UDP-N-acetyl-alpha-D-glucosamine is bound by residues arginine 332 and lysine 350. The active-site Proton acceptor is the histidine 362. Residues tyrosine 365 and asparagine 376 each coordinate UDP-N-acetyl-alpha-D-glucosamine. Residues alanine 379, 385–386 (NY), serine 404, alanine 422, and arginine 439 contribute to the acetyl-CoA site.

In the N-terminal section; belongs to the N-acetylglucosamine-1-phosphate uridyltransferase family. The protein in the C-terminal section; belongs to the transferase hexapeptide repeat family. In terms of assembly, homotrimer. Requires Mg(2+) as cofactor.

It localises to the cytoplasm. It catalyses the reaction alpha-D-glucosamine 1-phosphate + acetyl-CoA = N-acetyl-alpha-D-glucosamine 1-phosphate + CoA + H(+). The catalysed reaction is N-acetyl-alpha-D-glucosamine 1-phosphate + UTP + H(+) = UDP-N-acetyl-alpha-D-glucosamine + diphosphate. The protein operates within nucleotide-sugar biosynthesis; UDP-N-acetyl-alpha-D-glucosamine biosynthesis; N-acetyl-alpha-D-glucosamine 1-phosphate from alpha-D-glucosamine 6-phosphate (route II): step 2/2. It participates in nucleotide-sugar biosynthesis; UDP-N-acetyl-alpha-D-glucosamine biosynthesis; UDP-N-acetyl-alpha-D-glucosamine from N-acetyl-alpha-D-glucosamine 1-phosphate: step 1/1. It functions in the pathway bacterial outer membrane biogenesis; LPS lipid A biosynthesis. Functionally, catalyzes the last two sequential reactions in the de novo biosynthetic pathway for UDP-N-acetylglucosamine (UDP-GlcNAc). The C-terminal domain catalyzes the transfer of acetyl group from acetyl coenzyme A to glucosamine-1-phosphate (GlcN-1-P) to produce N-acetylglucosamine-1-phosphate (GlcNAc-1-P), which is converted into UDP-GlcNAc by the transfer of uridine 5-monophosphate (from uridine 5-triphosphate), a reaction catalyzed by the N-terminal domain. The protein is Bifunctional protein GlmU of Neisseria meningitidis serogroup A / serotype 4A (strain DSM 15465 / Z2491).